The following is a 284-amino-acid chain: Avenin-like b5 (284 aa).

The first 18 residues, 1–18, serve as a signal peptide directing secretion; sequence MKVFILALLALTATTAIA.

The protein belongs to the prolamin family. In terms of processing, contains disulfide bonds. As to expression, expressed only in developing endosperms. Not detected in roots, stems or leaves.

Functionally, seed storage protein. Might be integrated via inter-chain disulfide bonds within the glutenin polymer. This chain is Avenin-like b5, found in Triticum aestivum (Wheat).